Here is a 662-residue protein sequence, read N- to C-terminus: Probable protein phosphatase 2C 4 (662 aa).

At S153 the chain carries Phosphoserine. In terms of domain architecture, PPM-type phosphatase spans D249–L653. 4 residues coordinate Mn(2+): D286, G287, D581, and D644.

Belongs to the PP2C family. The cofactor is Mg(2+). It depends on Mn(2+) as a cofactor. Expressed in seedlings, roots, leaves, stems, young inflorescences, flowers and siliques.

It localises to the nucleus. The enzyme catalyses O-phospho-L-seryl-[protein] + H2O = L-seryl-[protein] + phosphate. It catalyses the reaction O-phospho-L-threonyl-[protein] + H2O = L-threonyl-[protein] + phosphate. Functionally, involved in leaf development regulation. This Arabidopsis thaliana (Mouse-ear cress) protein is Probable protein phosphatase 2C 4 (PLL5).